The primary structure comprises 383 residues: Na(+)/H(+) antiporter NhaA (383 aa).

The next 11 membrane-spanning stretches (helical) occupy residues 10-30, 56-76, 91-111, 121-141, 150-170, 174-194, 206-226, 254-274, 289-308, 327-347, and 355-375; these read LIGG…NNSP, LMHW…GLEI, IITP…IYLS, GWAI…ALLG, LLVI…IAIF, SLSL…IICN, VVLG…ATLA, PWII…ISFS, IIWG…LAVF, GISL…VLAF, and AIKI…YIVL.

This sequence belongs to the NhaA Na(+)/H(+) (TC 2.A.33) antiporter family.

The protein resides in the cell inner membrane. The catalysed reaction is Na(+)(in) + 2 H(+)(out) = Na(+)(out) + 2 H(+)(in). Its function is as follows. Na(+)/H(+) antiporter that extrudes sodium in exchange for external protons. This is Na(+)/H(+) antiporter NhaA from Francisella tularensis subsp. mediasiatica (strain FSC147).